Consider the following 674-residue polypeptide: Acyl-coenzyme A oxidase acox-1.1 (674 aa).

FAD-binding positions include Y149 to T152, G157 to T158, and G191. Residues K285–Y288 and R295 contribute to the substrate site. FAD-binding positions include R320 and Q340–R343. ATP-binding residues include H342, S392, H396, and Q404. G411 lines the FAD pocket. Residue Y433–E434 coordinates substrate. Catalysis depends on E434, which acts as the Proton acceptor. E436 serves as a coordination point for FAD. ATP-binding positions include R533–R536 and Y581. A Microbody targeting signal motif is present at residues S672–L674.

The protein belongs to the acyl-CoA oxidase family. In terms of assembly, homodimer. Forms a heterodimer with acox-1.2. Forms a heterodimer with acox-1.3; the interaction may be important for the stability of acox-1.3. It depends on FAD as a cofactor. As to expression, expressed in hypodermis and intestine.

The protein localises to the peroxisome. It carries out the reaction nonanoyl-CoA + O2 = (2E)-nonenoyl-CoA + H2O2. The catalysed reaction is dodecanoyl-CoA + O2 = (2E)-dodecenoyl-CoA + H2O2. It catalyses the reaction a 2,3-saturated acyl-CoA + O2 = a (2E)-enoyl-CoA + H2O2. The enzyme catalyses heptanoyl-CoA + O2 = (2E)-heptenoyl-CoA + H2O2. It carries out the reaction (8R)-8-hydroxynonanoyl-CoA + O2 = (2E,8R)-8-hydroxynonenoyl-CoA + H2O2. The catalysed reaction is pentanoyl-CoA + O2 = (2E)-pentenoyl-CoA + H2O2. It catalyses the reaction hexadecanoyl-CoA + O2 = (2E)-hexadecenoyl-CoA + H2O2. The enzyme catalyses IC-asc-C7-CoA + O2 = IC-asc-DeltaC7-CoA + H2O2. It carries out the reaction IC-asc-C9-CoA + O2 = IC-asc-DeltaC9-CoA + H2O2. The catalysed reaction is asc-omegaC5-CoA + O2 = asc-omegaDeltaC5-CoA + H2O2. It catalyses the reaction asc-C7-CoA + O2 = asc-DeltaC7-CoA + H2O2. The enzyme catalyses asc-omegaC7-CoA + O2 = asc-omegaDeltaC7-CoA + H2O2. It carries out the reaction asc-C9-CoA + O2 = asc-DeltaC9-CoA + H2O2. The catalysed reaction is asc-C13-CoA + O2 = asc-DeltaC13-CoA + H2O2. It functions in the pathway lipid metabolism; peroxisomal fatty acid beta-oxidation. Its activity is regulated as follows. Activated by ATP. ATP binding leads to a conformational change that promotes FAD cofactor binding and enzyme activity. ATP binding likely occurs during acox-1.1 folding and/or dimer formation. Functionally, involved in the first step of peroxisomal beta-oxidation by catalyzing the desaturation of fatty acid-derived side chains. Specifically, catalyzes the desaturation of fatty acids heptanoyl-CoA (C7), nonanoyl-CoA (C9), dodecanoyl-CoA (C12) and to a lesser extent pentanoyl-CoA (C5) and hexadecanoyl-CoA (C16), and hydroxylated fatty acid hydroxynonanoyl-CoA. Also, catalyzes the desaturation fatty acid-derived side chains of ascaroside pheromones, which regulates development and behavior. Specifically, shortens ascaroside with 5-carbon omega side chain (asc-omega-C5), 7-carbon side chain (asc-C7), 9-carbon side chain (asc-C9), 11-carbon side chain (asc-C11), 13-carbon side chain (asc-C13), 15-carbon side chain (asc-C15) and to a lesser extent ascarosides with 7-omega-carbon side chain (asc-omega-C7). Also shortens indol-3-carbonyl(IC)-ascarosides with 7-carbon side chain (IC-asc-C7) and to a lesser extent (IC)-ascarosides with 9-carbon side chain (IC-asc-C9). May associate and regulate the folding and/or the catalytic activity of other acyl-coenzyme A oxidases including acox-1.2, acox-1.3, acox-1.4 and acox-3 modulating the type of ascarosides produced. In association with acox-1.3, catalyzes the desaturation of asc-C7-CoA but not of fatty acids or hydroxylated fatty acids. Involved in the biosynthesis of asc-C6-MK (daumone 2) and asc-delta-C9 (daumone 3) but not asc-C7 (daumone 1); daumones are pheromones produced during unfavourable growth conditions which promote entry into the dauer stage. This chain is Acyl-coenzyme A oxidase acox-1.1, found in Caenorhabditis elegans.